A 650-amino-acid chain; its full sequence is Acetyl-coenzyme A synthetase (650 aa).

Residues 191–194, Thr-311, and Asn-335 contribute to the CoA site; that span reads RGGR. Residues 387-389, 411-416, Asp-500, and Arg-515 contribute to the ATP site; these read GEP and DTWWQT. Ser-523 is a binding site for CoA. Arg-526 is a binding site for ATP. 3 residues coordinate Mg(2+): Val-537, His-539, and Val-542. Residue Arg-584 coordinates CoA. At Lys-609 the chain carries N6-acetyllysine.

Belongs to the ATP-dependent AMP-binding enzyme family. Mg(2+) serves as cofactor. Acetylated. Deacetylation by the SIR2-homolog deacetylase activates the enzyme.

The enzyme catalyses acetate + ATP + CoA = acetyl-CoA + AMP + diphosphate. Functionally, catalyzes the conversion of acetate into acetyl-CoA (AcCoA), an essential intermediate at the junction of anabolic and catabolic pathways. AcsA undergoes a two-step reaction. In the first half reaction, AcsA combines acetate with ATP to form acetyl-adenylate (AcAMP) intermediate. In the second half reaction, it can then transfer the acetyl group from AcAMP to the sulfhydryl group of CoA, forming the product AcCoA. In Shewanella sp. (strain ANA-3), this protein is Acetyl-coenzyme A synthetase.